We begin with the raw amino-acid sequence, 183 residues long: Inner membrane-spanning protein YciB (183 aa).

A run of 5 helical transmembrane segments spans residues 19-39 (LYGVQQAAITLVIATVIQLIV), 53-73 (IMGIFAVFFGILTAYFNDLNF), 76-96 (WKVTIINGLFAAVLLVSQFVF), 121-141 (LGWAGFFIICMLLNIVISYYF), and 151-171 (TFGFTGLSLIAAIATGVYLYP).

Belongs to the YciB family.

Its subcellular location is the cell inner membrane. Its function is as follows. Plays a role in cell envelope biogenesis, maintenance of cell envelope integrity and membrane homeostasis. This is Inner membrane-spanning protein YciB from Actinobacillus pleuropneumoniae serotype 5b (strain L20).